Here is an 894-residue protein sequence, read N- to C-terminus: MKFSHSLQFNSVPEWSTKYLAYSQLKKLIYSLQKDKLYSNNKHHVVEPHDANDENLPLLADASPDDQFYISKFVAALNQELKKIDKFYISQETGLIANYNELKDDVMELENTNKATQLFNQQQQHQLQSVARNRKSKSQQRQRRFSSVSSTDSNPSLTDMSIDSAPVIHTQVSNTTNNGNSMQNLASASVSLSNSNPVYLSPFTQHRLSLKKRLISIYTQLSELKDFIELNQTGFSKICKKFDKSLNTNLKQNYLNYIKFHSHVFNPATINRIQHHITETILTYASLNKGTRRPSNTFNLDADRINNDENSSGNEEDEDGNRQEVLDFQDAERELSSHLRDHVVWERNTVWKDMMNLERKYQSAKTDNKKFSKLSSSQLRPNANITESMAMSSGGAGIIAPSTDSLTFRELMHLPPKQWLQFIMGQTSLLKFLLITSCFIALLTFNLTPFTQDSLQKNCFAILIYASLLWATETIPLFVTSLMIPLLIVVFPVIKDPITSQPMSPRDSSQFILSTMWSSVIMLLLGGFTLAAALSKYNIAKVLSTHILASAGTNPHFILLTNMFVALFVSMWVSNVAAPVLCYSIVQPLLRTLPRNCSYAKALILGIALASNIGGMSSPIASPQNIFSIGIMDPSPSWAEWFMIALPVCFICVMAIWVLLIITFPPEPNVKILQLHPSRDPFTLKQWFVTLVCIITIVLWCLSNQISGIFGEMGIISIIPIVVFFGTGLLTSDDFNNFMWTIVVLAMGGTTLGKAVSSSGLLSTMAQLIKAQVEHEPIFIIVLIFGLVILVMATFVSHTVAAMIIVPLMSEIGSNLPSGDHSRLLIVIAALLCSSAMGLPTSGFPNVTAISMIDEVGDRYLTVGTFITRGVPASLLSYAAIVTVGYGILKVMGF.

Residues 1-256 (MKFSHSLQFN…NTNLKQNYLN (256 aa)) form the SPX domain. Disordered stretches follow at residues 124-160 (QHQL…LTDM) and 293-321 (RPSN…EDGN). A compositionally biased stretch (basic residues) spans 132-144 (RNRKSKSQQRQRR). Positions 151 to 160 (TDSNPSLTDM) are enriched in polar residues. Phosphoserine is present on residues serine 295, serine 311, and serine 312. The next 13 helical transmembrane spans lie at 430–450 (LKFL…LTPF), 474–494 (TIPL…FPVI), 511–531 (FILS…FTLA), 557–577 (FILL…SNVA), 602–622 (ALIL…PIAS), 642–662 (FMIA…LLII), 682–702 (FTLK…LWCL), 706–726 (ISGI…VFFG), 738–758 (FMWT…AVSS), 777–797 (PIFI…TFVS), 799–819 (TVAA…LPSG), 824–844 (LLIV…TSGF), and 874–894 (SLLS…VMGF).

Belongs to the CitM (TC 2.A.11) transporter family. In terms of processing, ubiquitinated by RSP5. RSP5-mediated ubiquitination initiates internalization and degradation by the endocytic pathway.

It is found in the vacuole membrane. Its function is as follows. Vacuolar phosphate transporter that probably exports phosphate from the vacuolar lumen to the cytosol. The sequence is that of Low-affinity phosphate transporter PHO91 (PHO91) from Saccharomyces cerevisiae (strain ATCC 204508 / S288c) (Baker's yeast).